We begin with the raw amino-acid sequence, 401 residues long: Subtilisin-like protease 7 (401 aa).

An N-terminal signal peptide occupies residues 1–20; that stretch reads MGFITKAIPLALAAASVING. A propeptide spanning residues 21–119 is cleaved from the precursor; that stretch reads AEILETRAGV…IERDARVQIN (99 aa). Positions 36–118 constitute an Inhibitor I9 domain; it reads KYIVVMNDGM…YIERDARVQI (83 aa). N-linked (GlcNAc...) asparagine glycosylation is present at asparagine 58. Residues 129 to 401 enclose the Peptidase S8 domain; it reads SWGLARVGSR…SKLINNGSGM (273 aa). Active-site charge relay system residues include aspartate 161 and histidine 193. 2 N-linked (GlcNAc...) asparagine glycosylation sites follow: asparagine 223 and asparagine 253. Serine 347 functions as the Charge relay system in the catalytic mechanism. Asparagine 397 is a glycosylation site (N-linked (GlcNAc...) asparagine).

Belongs to the peptidase S8 family.

The protein resides in the secreted. Its function is as follows. Secreted subtilisin-like serine protease with keratinolytic activity that contributes to pathogenicity. This Trichophyton equinum (Horse ringworm fungus) protein is Subtilisin-like protease 7 (SUB7).